The following is a 488-amino-acid chain: Mannosylglycerate hydrolase MGH2 (488 aa).

Residues tyrosine 94, 98–101 (WNWD), tyrosine 146, glutamine 167, and glycine 227 contribute to the substrate site. Aspartate 229 acts as the Proton donor in catalysis. Substrate-binding positions include arginine 262 and 415 to 416 (YW). Glutamate 459 acts as the Proton acceptor in catalysis.

Belongs to the glycosyl hydrolase 63 family.

It catalyses the reaction (2R)-2-O-(alpha-D-mannosyl)-glycerate + H2O = D-mannose + (R)-glycerate. The catalysed reaction is (2R)-2-O-(alpha-D-glucopyranosyl)-glycerate + H2O = (R)-glycerate + D-glucose. Its activity is regulated as follows. Activity is not dependent on divalent cations, but it is enhanced by Mn(2+). Catalyzes the hydrolysis of alpha-D-mannosyl-glycerate (MG) to D-glycerate and D-mannose. Can also hydrolyze alpha-D-glucopyranosyl-glycerate (GG)with lower efficiency. The protein is Mannosylglycerate hydrolase MGH2 of Selaginella moellendorffii (Spikemoss).